The primary structure comprises 449 residues: Glucose-6-phosphate isomerase (449 aa).

Glutamate 291 serves as the catalytic Proton donor. Residues histidine 312 and lysine 426 contribute to the active site.

The protein belongs to the GPI family.

Its subcellular location is the cytoplasm. The catalysed reaction is alpha-D-glucose 6-phosphate = beta-D-fructose 6-phosphate. It participates in carbohydrate biosynthesis; gluconeogenesis. Its pathway is carbohydrate degradation; glycolysis; D-glyceraldehyde 3-phosphate and glycerone phosphate from D-glucose: step 2/4. Functionally, catalyzes the reversible isomerization of glucose-6-phosphate to fructose-6-phosphate. This chain is Glucose-6-phosphate isomerase, found in Clostridium botulinum (strain Alaska E43 / Type E3).